Here is a 285-residue protein sequence, read N- to C-terminus: Seipin (285 aa).

Over 1-16 the chain is Cytoplasmic; it reads MKINVSRPLQFLQWSS. Residues 17 to 37 traverse the membrane as a helical segment; the sequence is YIVVAFLIQLLIILPLSILIY. Over 38–244 the chain is Lumenal; it reads HDFYLRLLPA…GLRNLMLRKR (207 aa). The helical transmembrane segment at 245 to 265 threads the bilayer; sequence FLSYIIGISIFHCIICVLFFI. The Cytoplasmic portion of the chain corresponds to 266–285; the sequence is TGCTAFIFVRKGQEKSKKHS.

Belongs to the seipin family.

The protein localises to the endoplasmic reticulum membrane. Involved in lipid metabolism and lipid droplet (LD) morphology, number, and size. Facilitates initiation of LD formation, and ensures that vectorial budding of LDs from the ER is directed towards the cytoplasm. The polypeptide is Seipin (Saccharomyces cerevisiae (strain ATCC 204508 / S288c) (Baker's yeast)).